A 331-amino-acid polypeptide reads, in one-letter code: Ketol-acid reductoisomerase (NADP(+)) (331 aa).

Residues 2–182 form the KARI N-terminal Rossmann domain; that stretch reads ARMYYDEDAN…GGTRGGVLET (181 aa). NADP(+) contacts are provided by residues 25–28, Ser51, Ser53, and 83–86; these read YGSQ and DEVQ. His108 is a catalytic residue. Residue Gly134 participates in NADP(+) binding. One can recognise a KARI C-terminal knotted domain in the interval 183–328; it reads TFREETETDL…KDLRAMFSWL (146 aa). 4 residues coordinate Mg(2+): Asp191, Glu195, Glu227, and Glu231. Ser252 lines the substrate pocket.

The protein belongs to the ketol-acid reductoisomerase family. Mg(2+) is required as a cofactor.

The catalysed reaction is (2R)-2,3-dihydroxy-3-methylbutanoate + NADP(+) = (2S)-2-acetolactate + NADPH + H(+). It carries out the reaction (2R,3R)-2,3-dihydroxy-3-methylpentanoate + NADP(+) = (S)-2-ethyl-2-hydroxy-3-oxobutanoate + NADPH + H(+). It participates in amino-acid biosynthesis; L-isoleucine biosynthesis; L-isoleucine from 2-oxobutanoate: step 2/4. The protein operates within amino-acid biosynthesis; L-valine biosynthesis; L-valine from pyruvate: step 2/4. In terms of biological role, involved in the biosynthesis of branched-chain amino acids (BCAA). Catalyzes an alkyl-migration followed by a ketol-acid reduction of (S)-2-acetolactate (S2AL) to yield (R)-2,3-dihydroxy-isovalerate. In the isomerase reaction, S2AL is rearranged via a Mg-dependent methyl migration to produce 3-hydroxy-3-methyl-2-ketobutyrate (HMKB). In the reductase reaction, this 2-ketoacid undergoes a metal-dependent reduction by NADPH to yield (R)-2,3-dihydroxy-isovalerate. The polypeptide is Ketol-acid reductoisomerase (NADP(+)) (Nostoc sp. (strain PCC 7120 / SAG 25.82 / UTEX 2576)).